The sequence spans 323 residues: Prenyl transferase (323 aa).

Isopentenyl diphosphate is bound by residues lysine 46, arginine 49, and histidine 81. Mg(2+)-binding residues include aspartate 88 and aspartate 92. Residue arginine 97 participates in an all-trans-polyprenyl diphosphate binding. Arginine 98 serves as a coordination point for isopentenyl diphosphate. Residues lysine 174, threonine 175, and glutamine 212 each coordinate an all-trans-polyprenyl diphosphate.

It belongs to the FPP/GGPP synthase family. Mg(2+) serves as cofactor.

Its subcellular location is the plastid. The protein localises to the chloroplast. In terms of biological role, possible role in synthesis of the nonaprenyl side chain of plastoquinone or in synthesis of other prenyl chains such as undekaprenyl pyrophosphate. The chain is Prenyl transferase (preA) from Porphyra purpurea (Red seaweed).